The sequence spans 63 residues: Prokaryotic ubiquitin-like protein Pup (63 aa).

Over residues 1–11 the composition is skewed to polar residues; it reads MPQKFEQMQSA. The tract at residues 1–28 is disordered; sequence MPQKFEQMQSAEQKHDEDETIAQAGTQI. Residues 19-57 form an ARC ATPase binding region; that stretch reads ETIAQAGTQIDDTVDALDAVLDDIESVLESNAEEYVGSF. Glutamate 63 participates in a covalent cross-link: Isoglutamyl lysine isopeptide (Glu-Lys) (interchain with K-? in acceptor proteins).

This sequence belongs to the prokaryotic ubiquitin-like protein family. In terms of assembly, strongly interacts with the proteasome-associated ATPase ARC through a hydrophobic interface; the interacting region of Pup lies in its C-terminal half. There is one Pup binding site per ARC hexamer ring.

It participates in protein degradation; proteasomal Pup-dependent pathway. In terms of biological role, protein modifier that is covalently attached to lysine residues of substrate proteins, thereby targeting them for proteasomal degradation. The tagging system is termed pupylation. This Bifidobacterium adolescentis (strain ATCC 15703 / DSM 20083 / NCTC 11814 / E194a) protein is Prokaryotic ubiquitin-like protein Pup (pup).